The sequence spans 146 residues: MDDEKYYIVKKKALPEVLLKVVEAKRLLDSERVMTIQEATDAVDISRSSFYKYKDDIFPFHENNRGKTITFMLQMDDIPGLLSMVLNQIAKSNANVLTIHQTIPIGGIASLTLGIEILPQTLELSQMLESIEALDGIHYLKILGRE.

An ACT domain is found at Thr-70 to Arg-145.

It belongs to the UPF0735 family.

This is UPF0735 ACT domain-containing protein Cphy_3604 from Lachnoclostridium phytofermentans (strain ATCC 700394 / DSM 18823 / ISDg) (Clostridium phytofermentans).